A 151-amino-acid chain; its full sequence is Deoxyuridine 5'-triphosphate nucleotidohydrolase (151 aa).

Residues 70–72, Asn-83, 87–89, and Met-97 each bind substrate; these read RSG and LID.

Belongs to the dUTPase family. Requires Mg(2+) as cofactor.

It catalyses the reaction dUTP + H2O = dUMP + diphosphate + H(+). It functions in the pathway pyrimidine metabolism; dUMP biosynthesis; dUMP from dCTP (dUTP route): step 2/2. This enzyme is involved in nucleotide metabolism: it produces dUMP, the immediate precursor of thymidine nucleotides and it decreases the intracellular concentration of dUTP so that uracil cannot be incorporated into DNA. In Yersinia pseudotuberculosis serotype O:1b (strain IP 31758), this protein is Deoxyuridine 5'-triphosphate nucleotidohydrolase.